Consider the following 453-residue polypeptide: Na(+)/H(+) antiporter NhaA (453 aa).

The next 11 membrane-spanning stretches (helical) occupy residues 22 to 42 (ASLLLFAATIVAMVLANSPWA), 72 to 92 (MLAFVNDALMAVFFFVIGLEI), 108 to 128 (LLPIIAACGGMIVPVLFYMLV), 137 to 157 (GAAIPMATDIAFALAVLGLLG), 166 to 186 (IFLTALAVVDDIGGIIIIALF), 189 to 209 (GHIAFEPLLISLIVLALLYVG), 218 to 238 (LFFYIGGFIVWLLFLESGIHP), 316 to 336 (PLVNYVILPLFAFVNAGVTFG), 343 to 363 (LVNVPLAVFVGLFVGKTLGIF), 386 to 406 (LFGVSMLGGIGFTVALFIANL), and 424 to 444 (LGVFTGSFISGLCGYLVLKWV).

The protein belongs to the NhaA Na(+)/H(+) (TC 2.A.33) antiporter family.

Its subcellular location is the cell inner membrane. The enzyme catalyses Na(+)(in) + 2 H(+)(out) = Na(+)(out) + 2 H(+)(in). In terms of biological role, na(+)/H(+) antiporter that extrudes sodium in exchange for external protons. This is Na(+)/H(+) antiporter NhaA from Parabacteroides distasonis (strain ATCC 8503 / DSM 20701 / CIP 104284 / JCM 5825 / NCTC 11152).